A 292-amino-acid polypeptide reads, in one-letter code: Siderophore triacetylfusarinine C esterase (292 aa).

The triacetylfusarinine C site is built by R97, S148, Y149, S174, W176, and H267.

The protein belongs to the esterase D family.

It is found in the cytoplasm. The catalysed reaction is triacetylfusarinine C + 3 H2O = 3 N-acetylfusarinine + Fe(3+). In terms of biological role, displays specific triacetylfusarinine C (TAFC) esterase activity but does not hydrolyze fusarinine C, which has the same core structure as TAFC. Hydrolysis optimizes but is not essential for TAFC-mediated iron uptake. Both extra- and intracellular siderophores have been shown to be crucial for the virulence. Subsequent to chelation of iron and uptake, FsC and TAFC are hydrolyzed and the iron is transferred to the metabolism or to the intracellular siderophore ferricrocin (FC) for transport and storage of iron. Hydrolyzes both TAFC and DF-TAFC with equal efficiencies, suggesting that its function might not be restricted to the release of iron from the siderophore but might also include the degradation of the iron-free chelator to protect cells. This chain is Siderophore triacetylfusarinine C esterase, found in Aspergillus fumigatus (strain ATCC MYA-4609 / CBS 101355 / FGSC A1100 / Af293) (Neosartorya fumigata).